The following is a 309-amino-acid chain: NADH-cytochrome b5 reductase 1 (309 aa).

The chain crosses the membrane as a helical span at residues 29-49; the sequence is EFVPYAVALTAVLAGFKLFTG. Residues 60-165 enclose the FAD-binding FR-type domain; sequence TEFQEFVLKE…RGPKGAMVYT (106 aa). FAD-binding positions include 145-160 and 171-208; these read TTLK…GPKG and HIGM…KVDL.

This sequence belongs to the flavoprotein pyridine nucleotide cytochrome reductase family. Monomer. Component of the 2-(3-amino-3-carboxypropyl)histidine synthase complex composed of dph1, dph2, dph3 and a NADH-dependent reductase, predominantly cbr1. Requires FAD as cofactor.

It is found in the mitochondrion outer membrane. The catalysed reaction is 2 Fe(III)-[cytochrome b5] + NADH = 2 Fe(II)-[cytochrome b5] + NAD(+) + H(+). It catalyses the reaction 2 Fe(3+)-[Dph3] + NADH = 2 Fe(2+)-[Dph3] + NAD(+) + H(+). It participates in protein modification; peptidyl-diphthamide biosynthesis. In terms of biological role, NADH-dependent reductase for dph3 and cytochrome b5. Required for the first step of diphthamide biosynthesis, a post-translational modification of histidine which occurs in elongation factor 2. Dph1 and dph2 transfer a 3-amino-3-carboxypropyl (ACP) group from S-adenosyl-L-methionine (SAM) to a histidine residue, the reaction is assisted by a reduction system comprising dph3 and a NADH-dependent reductase, predominantly cbr1. By reducing dph3, also involved in the formation of the tRNA wobble base modification mcm5s 2U (5-methoxycarbonylmethyl-2-thiouridine), mediated by the elongator complex. The cytochrome b5/NADH cytochrome b5 reductase electron transfer system supports the catalytic activity of several sterol biosynthetic enzymes. The sequence is that of NADH-cytochrome b5 reductase 1 (cbr1) from Aspergillus clavatus (strain ATCC 1007 / CBS 513.65 / DSM 816 / NCTC 3887 / NRRL 1 / QM 1276 / 107).